A 98-amino-acid polypeptide reads, in one-letter code: Large ribosomal subunit protein uL23 (98 aa).

The protein belongs to the universal ribosomal protein uL23 family. As to quaternary structure, part of the 50S ribosomal subunit. Contacts protein L29, and trigger factor when it is bound to the ribosome.

One of the early assembly proteins it binds 23S rRNA. One of the proteins that surrounds the polypeptide exit tunnel on the outside of the ribosome. Forms the main docking site for trigger factor binding to the ribosome. The polypeptide is Large ribosomal subunit protein uL23 (Clostridium beijerinckii (strain ATCC 51743 / NCIMB 8052) (Clostridium acetobutylicum)).